The following is a 495-amino-acid chain: Probable cytosol aminopeptidase (495 aa).

The Mn(2+) site is built by Lys258 and Asp263. Residue Lys270 is part of the active site. Mn(2+) is bound by residues Asp281, Asp340, and Glu342. The active site involves Arg344.

This sequence belongs to the peptidase M17 family. Requires Mn(2+) as cofactor.

The protein localises to the cytoplasm. The enzyme catalyses Release of an N-terminal amino acid, Xaa-|-Yaa-, in which Xaa is preferably Leu, but may be other amino acids including Pro although not Arg or Lys, and Yaa may be Pro. Amino acid amides and methyl esters are also readily hydrolyzed, but rates on arylamides are exceedingly low.. It catalyses the reaction Release of an N-terminal amino acid, preferentially leucine, but not glutamic or aspartic acids.. In terms of biological role, presumably involved in the processing and regular turnover of intracellular proteins. Catalyzes the removal of unsubstituted N-terminal amino acids from various peptides. The sequence is that of Probable cytosol aminopeptidase from Leptospira interrogans serogroup Icterohaemorrhagiae serovar copenhageni (strain Fiocruz L1-130).